Reading from the N-terminus, the 241-residue chain is ATP synthase subunit a (241 aa).

Helical transmembrane passes span 23–43 (VSFT…AAFF), 83–103 (YFPY…LGML), 113–133 (IAVT…IGFA), 188–208 (VLAG…FAVV), and 209–229 (LGVT…FTIL).

It belongs to the ATPase A chain family. In terms of assembly, F-type ATPases have 2 components, CF(1) - the catalytic core - and CF(0) - the membrane proton channel. CF(1) has five subunits: alpha(3), beta(3), gamma(1), delta(1), epsilon(1). CF(0) has four main subunits: a, b, b' and c.

It localises to the cell inner membrane. Key component of the proton channel; it plays a direct role in the translocation of protons across the membrane. In Rhodospirillum rubrum (strain ATCC 11170 / ATH 1.1.1 / DSM 467 / LMG 4362 / NCIMB 8255 / S1), this protein is ATP synthase subunit a.